The primary structure comprises 105 residues: Large ribosomal subunit protein uL24 (105 aa).

The protein belongs to the universal ribosomal protein uL24 family. Part of the 50S ribosomal subunit.

Functionally, one of two assembly initiator proteins, it binds directly to the 5'-end of the 23S rRNA, where it nucleates assembly of the 50S subunit. One of the proteins that surrounds the polypeptide exit tunnel on the outside of the subunit. The polypeptide is Large ribosomal subunit protein uL24 (Lachnoclostridium phytofermentans (strain ATCC 700394 / DSM 18823 / ISDg) (Clostridium phytofermentans)).